Reading from the N-terminus, the 463-residue chain is L-seryl-tRNA(Sec) selenium transferase (463 aa).

N6-(pyridoxal phosphate)lysine is present on K295.

The protein belongs to the SelA family. As to quaternary structure, homodecamer; pentamer of dimers. Binds only one seryl-tRNA(Sec) per dimer. Pyridoxal 5'-phosphate serves as cofactor.

It localises to the cytoplasm. It carries out the reaction L-seryl-tRNA(Sec) + selenophosphate + H(+) = L-selenocysteinyl-tRNA(Sec) + phosphate. Its pathway is aminoacyl-tRNA biosynthesis; selenocysteinyl-tRNA(Sec) biosynthesis; selenocysteinyl-tRNA(Sec) from L-seryl-tRNA(Sec) (bacterial route): step 1/1. Its function is as follows. Converts seryl-tRNA(Sec) to selenocysteinyl-tRNA(Sec) required for selenoprotein biosynthesis. In Salmonella paratyphi A (strain AKU_12601), this protein is L-seryl-tRNA(Sec) selenium transferase.